The primary structure comprises 120 residues: Flagellar protein FliT (120 aa).

The interval 1 to 50 is required for homodimerization; it reads MTNFIPSLTDWHALHALSITMLDLAHSGKWDELIEQEMNYVQLVEGIARN. Positions 59–97 are fliD binding; that stretch reads LINQAKEILNAVLRNEAELKTLLQHRMEELRQLIDQTGK.

This sequence belongs to the FliT family. In terms of assembly, homodimer. Interacts with FliD and FlhC.

Its subcellular location is the cytoplasm. It localises to the cytosol. Dual-function protein that regulates the transcription of class 2 flagellar operons and that also acts as an export chaperone for the filament-capping protein FliD. As a transcriptional regulator, acts as an anti-FlhDC factor; it directly binds FlhC, thus inhibiting the binding of the FlhC/FlhD complex to class 2 promoters, resulting in decreased expression of class 2 flagellar operons. As a chaperone, effects FliD transition to the membrane by preventing its premature polymerization, and by directing it to the export apparatus. This chain is Flagellar protein FliT, found in Citrobacter koseri (strain ATCC BAA-895 / CDC 4225-83 / SGSC4696).